The sequence spans 142 residues: Hemoglobin subunit epsilon (142 aa).

The Globin domain occupies 3–142 (HFTAEEKAAI…KLVSAVAIAL (140 aa)). Phosphoserine is present on residues Ser14 and Ser51. 2 residues coordinate heme b: His64 and His93.

The protein belongs to the globin family. As to quaternary structure, heterotetramer of two alpha chains and two epsilon chains in early embryonic hemoglobin Gower-2; two zeta chains and two epsilon chains in early embryonic hemoglobin Gower-1. As to expression, red blood cells.

The epsilon chain is a beta-type chain of early mammalian embryonic hemoglobin. This Callithrix geoffroyi (Geoffroy's marmoset) protein is Hemoglobin subunit epsilon (HBE1).